Consider the following 289-residue polypeptide: 4-diphosphocytidyl-2-C-methyl-D-erythritol kinase (289 aa).

Lys-11 is an active-site residue. 95–105 (PMGGGIGGGSS) is a binding site for ATP. Asp-137 is an active-site residue.

Belongs to the GHMP kinase family. IspE subfamily.

The enzyme catalyses 4-CDP-2-C-methyl-D-erythritol + ATP = 4-CDP-2-C-methyl-D-erythritol 2-phosphate + ADP + H(+). Its pathway is isoprenoid biosynthesis; isopentenyl diphosphate biosynthesis via DXP pathway; isopentenyl diphosphate from 1-deoxy-D-xylulose 5-phosphate: step 3/6. Its function is as follows. Catalyzes the phosphorylation of the position 2 hydroxy group of 4-diphosphocytidyl-2C-methyl-D-erythritol. The chain is 4-diphosphocytidyl-2-C-methyl-D-erythritol kinase from Aeromonas salmonicida (strain A449).